An 89-amino-acid polypeptide reads, in one-letter code: Small ribosomal subunit protein uS15 (89 aa).

Over residues 1-21 the composition is skewed to basic and acidic residues; that stretch reads MVMTAEDKAQVIGEHKKHDGD. The disordered stretch occupies residues 1–24; it reads MVMTAEDKAQVIGEHKKHDGDTGS.

Belongs to the universal ribosomal protein uS15 family. Part of the 30S ribosomal subunit. Forms a bridge to the 50S subunit in the 70S ribosome, contacting the 23S rRNA.

In terms of biological role, one of the primary rRNA binding proteins, it binds directly to 16S rRNA where it helps nucleate assembly of the platform of the 30S subunit by binding and bridging several RNA helices of the 16S rRNA. Functionally, forms an intersubunit bridge (bridge B4) with the 23S rRNA of the 50S subunit in the ribosome. The chain is Small ribosomal subunit protein uS15 from Solidesulfovibrio magneticus (strain ATCC 700980 / DSM 13731 / RS-1) (Desulfovibrio magneticus).